Consider the following 146-residue polypeptide: Large ribosomal subunit protein uL15 (146 aa).

A disordered region spans residues 1 to 51; that stretch reads MKLHELQPAAGSRKVRNRVGRGTSSGNGKTSGRGQKGQKARSGGGVRLGFE. 2 stretches are compositionally biased toward gly residues: residues 23-35 and 42-51; these read TSSG…GRGQ and SGGGVRLGFE.

It belongs to the universal ribosomal protein uL15 family. Part of the 50S ribosomal subunit.

In terms of biological role, binds to the 23S rRNA. The chain is Large ribosomal subunit protein uL15 from Streptococcus sanguinis (strain SK36).